We begin with the raw amino-acid sequence, 834 residues long: Putative COX1/OXI3 intron 1 protein (834 aa).

The segment at 162-188 (MKDTNNTKGNTKSEGSTERGNSGVDRG) is disordered. Residues 167–181 (NTKGNTKSEGSTERG) are compositionally biased toward polar residues. One can recognise a Reverse transcriptase domain in the interval 296–577 (LSNELGTGKF…TPARFLGYNI (282 aa)).

It is found in the mitochondrion. The sequence is that of Putative COX1/OXI3 intron 1 protein (AI1) from Saccharomyces cerevisiae (strain ATCC 204508 / S288c) (Baker's yeast).